A 451-amino-acid polypeptide reads, in one-letter code: Methylenetetrahydrofolate--tRNA-(uracil-5-)-methyltransferase TrmFO (451 aa).

10-15 (GGGLAG) contributes to the FAD binding site.

Belongs to the MnmG family. TrmFO subfamily. FAD serves as cofactor.

It localises to the cytoplasm. It carries out the reaction uridine(54) in tRNA + (6R)-5,10-methylene-5,6,7,8-tetrahydrofolate + NADH + H(+) = 5-methyluridine(54) in tRNA + (6S)-5,6,7,8-tetrahydrofolate + NAD(+). The enzyme catalyses uridine(54) in tRNA + (6R)-5,10-methylene-5,6,7,8-tetrahydrofolate + NADPH + H(+) = 5-methyluridine(54) in tRNA + (6S)-5,6,7,8-tetrahydrofolate + NADP(+). Catalyzes the folate-dependent formation of 5-methyl-uridine at position 54 (M-5-U54) in all tRNAs. The chain is Methylenetetrahydrofolate--tRNA-(uracil-5-)-methyltransferase TrmFO from Anaeromyxobacter sp. (strain Fw109-5).